The sequence spans 557 residues: MNKLRSSAITQGVQRSPNRSMLRAVGFNDEDFNKPIIGVANGYSTITPCNMGLNKLALKAEESIKRSGGMPQMFGTITVSDGISMGTEGMKYSLVSREVIADSIETACNAQSMDGVLAIGGCDKNMPGAMIAIARMNIPSIFIYGGTIKPGKLHGEDLTVVSAFEAVGQLTSGKINEERLIQVEKNCIPGAGSCGGMFTANTMSAVIEVLGLSLPHSSTMAAEDLEKELSADKSAEILVSAIEKDIRPLDLMTKKAFENAISVIMAIGGSTNAVLHILAIANTAGIDININDFERIRQKVPVICDLKPSGKYVTVDLHKAGGIPQVMKILLNAGLIHGDCKNIEGKTISEYLQNIPDKPPTNQNVIRDIDNPLYKKGHLAILKGNLASEGSVAKISGVKNPVLTGPAKIFESEEDCLKSILNNDIKAGDVVVIRNEGPVGGPGMREMLAPTSAIVGQGLGEKVALITDGRFSGGTYGLVVGHIAPEAAVGGNIALIKQGDLITVDAVKQLIEVDLSDEELEKRKKDWVKPIQKYKRGILSKYSRIVSTSSLGAVTDL.

Cysteine 49 is a [2Fe-2S] cluster binding site. Aspartate 81 is a Mg(2+) binding site. Cysteine 122 is a binding site for [2Fe-2S] cluster. Mg(2+) contacts are provided by aspartate 123 and lysine 124. Lysine 124 bears the N6-carboxylysine mark. Cysteine 194 contributes to the [2Fe-2S] cluster binding site. Residue glutamate 446 coordinates Mg(2+). The active-site Proton acceptor is the serine 472.

It belongs to the IlvD/Edd family. In terms of assembly, homodimer. Requires [2Fe-2S] cluster as cofactor. Mg(2+) serves as cofactor.

The catalysed reaction is (2R)-2,3-dihydroxy-3-methylbutanoate = 3-methyl-2-oxobutanoate + H2O. It catalyses the reaction (2R,3R)-2,3-dihydroxy-3-methylpentanoate = (S)-3-methyl-2-oxopentanoate + H2O. The protein operates within amino-acid biosynthesis; L-isoleucine biosynthesis; L-isoleucine from 2-oxobutanoate: step 3/4. Its pathway is amino-acid biosynthesis; L-valine biosynthesis; L-valine from pyruvate: step 3/4. In terms of biological role, functions in the biosynthesis of branched-chain amino acids. Catalyzes the dehydration of (2R,3R)-2,3-dihydroxy-3-methylpentanoate (2,3-dihydroxy-3-methylvalerate) into 2-oxo-3-methylpentanoate (2-oxo-3-methylvalerate) and of (2R)-2,3-dihydroxy-3-methylbutanoate (2,3-dihydroxyisovalerate) into 2-oxo-3-methylbutanoate (2-oxoisovalerate), the penultimate precursor to L-isoleucine and L-valine, respectively. This chain is Dihydroxy-acid dehydratase, found in Prochlorococcus marinus (strain AS9601).